The following is a 503-amino-acid chain: Cytochrome P450 3A15 (503 aa).

Residue Cys-442 participates in heme binding.

It belongs to the cytochrome P450 family. The cofactor is heme.

The protein localises to the endoplasmic reticulum membrane. Its subcellular location is the microsome membrane. It catalyses the reaction an organic molecule + reduced [NADPH--hemoprotein reductase] + O2 = an alcohol + oxidized [NADPH--hemoprotein reductase] + H2O + H(+). Cytochromes P450 are a group of heme-thiolate monooxygenases. In liver microsomes, this enzyme is involved in an NADPH-dependent electron transport pathway. It oxidizes a variety of structurally unrelated compounds, including steroids, fatty acids, and xenobiotics. The polypeptide is Cytochrome P450 3A15 (CYP3A15) (Cavia porcellus (Guinea pig)).